Reading from the N-terminus, the 594-residue chain is UvrABC system protein C (594 aa).

The region spanning 14 to 91 (DQPGCYLMKD…IKKYDPKYNI (78 aa)) is the GIY-YIG domain. Positions 196 to 231 (KEIRSELETKMYEASEKLEFERAKELRDQIAHIDAI) constitute a UVR domain.

The protein belongs to the UvrC family. In terms of assembly, interacts with UvrB in an incision complex.

The protein localises to the cytoplasm. The UvrABC repair system catalyzes the recognition and processing of DNA lesions. UvrC both incises the 5' and 3' sides of the lesion. The N-terminal half is responsible for the 3' incision and the C-terminal half is responsible for the 5' incision. The chain is UvrABC system protein C from Bacillus mycoides (strain KBAB4) (Bacillus weihenstephanensis).